A 227-amino-acid chain; its full sequence is Large ribosomal subunit protein uL1 (227 aa).

This sequence belongs to the universal ribosomal protein uL1 family. In terms of assembly, part of the 50S ribosomal subunit.

In terms of biological role, binds directly to 23S rRNA. The L1 stalk is quite mobile in the ribosome, and is involved in E site tRNA release. Functionally, protein L1 is also a translational repressor protein, it controls the translation of the L11 operon by binding to its mRNA. In Tropheryma whipplei (strain TW08/27) (Whipple's bacillus), this protein is Large ribosomal subunit protein uL1.